Consider the following 184-residue polypeptide: UPF0301 protein RSKD131_2391 (184 aa).

Belongs to the UPF0301 (AlgH) family.

This Cereibacter sphaeroides (strain KD131 / KCTC 12085) (Rhodobacter sphaeroides) protein is UPF0301 protein RSKD131_2391.